The sequence spans 61 residues: uncharacterized protein (61 aa).

Transmembrane regions (helical) follow at residues 7-24 (FNVF…YKLF) and 29-48 (VSTT…IVGL).

It localises to the cell membrane. This is an uncharacterized protein from Bacillus subtilis (strain 168).